Reading from the N-terminus, the 156-residue chain is MALYLVIRLRGQPDRRPEEEKALELLRLHKVYHAVLVKDDPSIKGMLERTLSSAVTWGEINKETLVELLKRRGRITGNKRLTEEYLKKIGFNSFEELAEALISGKVSLEDLPGVKPVFRLRPPSGGFRGTIRRNINARGELGYRGADINNLVLRML.

The protein belongs to the universal ribosomal protein uL30 family. Part of the 50S ribosomal subunit.

The sequence is that of Large ribosomal subunit protein uL30 from Thermofilum pendens (strain DSM 2475 / Hrk 5).